We begin with the raw amino-acid sequence, 91 residues long: Large ribosomal subunit protein bL27 (91 aa).

A disordered region spans residues 1–21; the sequence is MAHKKSGGSSRNGRDSAGRRL.

Belongs to the bacterial ribosomal protein bL27 family.

The sequence is that of Large ribosomal subunit protein bL27 from Phenylobacterium zucineum (strain HLK1).